Reading from the N-terminus, the 297-residue chain is Putative phosphate permease MJ0630 (297 aa).

9 helical membrane passes run 2–22 (ITIE…LFIL), 45–65 (LLIL…NVGS), 67–87 (VNSL…VMTL), 99–119 (TVII…YVFG), 121–141 (ILLS…ILYS), 154–174 (ITMI…NLGS), 180–200 (VLGT…FLCL), 225–245 (FIAQ…GMPV), and 274–294 (NIIF…FIIN).

The protein belongs to the inorganic phosphate transporter (PiT) (TC 2.A.20) family.

It localises to the cell membrane. Potential transporter for phosphate. In Methanocaldococcus jannaschii (strain ATCC 43067 / DSM 2661 / JAL-1 / JCM 10045 / NBRC 100440) (Methanococcus jannaschii), this protein is Putative phosphate permease MJ0630.